The sequence spans 98 residues: MNQERIYKVLLGPVVSEKSAAVGEASNQVVFKVLADASKVEIKAAVQALFNTKVESVRVLNVKGKTKRTRYGVGKRSDWKKAYVRLEQGQEIDFAVAE.

This sequence belongs to the universal ribosomal protein uL23 family. Part of the 50S ribosomal subunit. Contacts protein L29, and trigger factor when it is bound to the ribosome.

Functionally, one of the early assembly proteins it binds 23S rRNA. One of the proteins that surrounds the polypeptide exit tunnel on the outside of the ribosome. Forms the main docking site for trigger factor binding to the ribosome. This Cellvibrio japonicus (strain Ueda107) (Pseudomonas fluorescens subsp. cellulosa) protein is Large ribosomal subunit protein uL23.